The primary structure comprises 238 residues: Tritrans,polycis-undecaprenyl-diphosphate synthase (geranylgeranyl-diphosphate specific) (238 aa).

The active site involves aspartate 18. A Mg(2+)-binding site is contributed by aspartate 18. Substrate-binding positions include 19 to 22 and 64 to 66; these read GNRR and STE. Catalysis depends on asparagine 67, which acts as the Proton acceptor. Substrate contacts are provided by residues arginine 70, arginine 187, and 193 to 195; that span reads RLS. Glutamate 206 contributes to the Mg(2+) binding site.

Belongs to the UPP synthase family. In terms of assembly, homodimer. It depends on Mg(2+) as a cofactor.

It carries out the reaction geranylgeranyl diphosphate + 7 isopentenyl diphosphate = tri-trans,hepta-cis-undecaprenyl diphosphate + 7 diphosphate. In terms of biological role, catalyzes the sequential condensation of isopentenyl diphosphate (IPP) with geranylgeranyl diphosphate (GGPP) to yield (2Z,6Z,10Z,14Z,18Z,22Z,26Z,30E,34E,38E)-undecaprenyl diphosphate (tritrans,heptacis-UPP). It is probably the precursor of glycosyl carrier lipids. The sequence is that of Tritrans,polycis-undecaprenyl-diphosphate synthase (geranylgeranyl-diphosphate specific) from Pyrobaculum aerophilum (strain ATCC 51768 / DSM 7523 / JCM 9630 / CIP 104966 / NBRC 100827 / IM2).